A 475-amino-acid polypeptide reads, in one-letter code: Pyruvate kinase (475 aa).

Arg-33 serves as a coordination point for substrate. K(+) is bound by residues Asn-35, Ser-37, and Asp-67. Residue 35–38 coordinates ATP; it reads NFSH. Residues Arg-74 and Lys-155 each contribute to the ATP site. Glu-220 contributes to the Mg(2+) binding site. Residues Gly-243, Asp-244, and Thr-276 each coordinate substrate. Asp-244 lines the Mg(2+) pocket.

This sequence belongs to the pyruvate kinase family. In terms of assembly, homotetramer. Mg(2+) serves as cofactor. K(+) is required as a cofactor.

The enzyme catalyses pyruvate + ATP = phosphoenolpyruvate + ADP + H(+). It functions in the pathway carbohydrate degradation; glycolysis; pyruvate from D-glyceraldehyde 3-phosphate: step 5/5. The polypeptide is Pyruvate kinase (pyk) (Corynebacterium glutamicum (strain ATCC 13032 / DSM 20300 / JCM 1318 / BCRC 11384 / CCUG 27702 / LMG 3730 / NBRC 12168 / NCIMB 10025 / NRRL B-2784 / 534)).